Here is a 51-residue protein sequence, read N- to C-terminus: Large ribosomal subunit protein eL39 (51 aa).

Residues 1–15 are compositionally biased toward basic residues; the sequence is MPSHKSFRTKQKLAK. The tract at residues 1-21 is disordered; the sequence is MPSHKSFRTKQKLAKAARQNR.

It belongs to the eukaryotic ribosomal protein eL39 family. Component of the large ribosomal subunit (LSU). Mature yeast ribosomes consist of a small (40S) and a large (60S) subunit. The 40S small subunit contains 1 molecule of ribosomal RNA (18S rRNA) and at least 33 different proteins. The large 60S subunit contains 3 rRNA molecules (25S, 5.8S and 5S rRNA) and at least 46 different proteins. eL39 interacts with yih1.

The protein resides in the cytoplasm. Its function is as follows. Component of the ribosome, a large ribonucleoprotein complex responsible for the synthesis of proteins in the cell. The small ribosomal subunit (SSU) binds messenger RNAs (mRNAs) and translates the encoded message by selecting cognate aminoacyl-transfer RNA (tRNA) molecules. The large subunit (LSU) contains the ribosomal catalytic site termed the peptidyl transferase center (PTC), which catalyzes the formation of peptide bonds, thereby polymerizing the amino acids delivered by tRNAs into a polypeptide chain. The nascent polypeptides leave the ribosome through a tunnel in the LSU and interact with protein factors that function in enzymatic processing, targeting, and the membrane insertion of nascent chains at the exit of the ribosomal tunnel. This is Large ribosomal subunit protein eL39 (rpl39) from Schizosaccharomyces pombe (strain 972 / ATCC 24843) (Fission yeast).